Consider the following 267-residue polypeptide: MNALLTNPFKERLRKGEVQIGLWLSSTTSYMAEIAATSGYDWLLIDGEHAPNTIQDLYHQLQAVAPYASQPVIRPVEGSKSLIKQVLDIGAQTLLIPMVDTADQARQVSSATRYPPYGERGVGASVARAARWGRIENYMAQVNDSLCLLVQVESKTALDNLDEILDVEGIDGVFIGPADLSASLGYPDNAGHPEVQRIIETSIRRIRAAGKAAGFLAVAPDMAQQCLAWGANFVAVGVDTMLYSDALDQRLAMFKSGKNGPRIKGSY.

H49 (proton acceptor) is an active-site residue. Q151 provides a ligand contact to substrate. E153 serves as a coordination point for Mg(2+). Residues A178 and D179 each coordinate substrate. Position 179 (D179) interacts with Mg(2+).

The protein belongs to the HpcH/HpaI aldolase family. KDR aldolase subfamily. Homohexamer. It depends on Mg(2+) as a cofactor.

It carries out the reaction 2-dehydro-3-deoxy-L-rhamnonate = (S)-lactaldehyde + pyruvate. In terms of biological role, catalyzes the reversible retro-aldol cleavage of 2-keto-3-deoxy-L-rhamnonate (KDR) to pyruvate and lactaldehyde. This is 2-keto-3-deoxy-L-rhamnonate aldolase from Shigella boydii serotype 4 (strain Sb227).